A 152-amino-acid polypeptide reads, in one-letter code: CASP-like protein 5C3 (152 aa).

Over 1–17 (MVEVPGSVGTTASLSLR) the chain is Cytoplasmic. A helical membrane pass occupies residues 18–38 (LGQMVLAFGSLLFMTIGVRFY). The Extracellular portion of the chain corresponds to 39-42 (QFTA). Residues 43–63 (FCYLVTIMSLAIPWNLTLAMV) form a helical membrane-spanning segment. The Cytoplasmic portion of the chain corresponds to 64 to 78 (DIYCVILQQPFQKPR). Residues 79 to 99 (ILLAISIGDWVVSVLALASAS) traverse the membrane as a helical segment. The Extracellular portion of the chain corresponds to 100–128 (SAASVVDILRSNESSCPPTICNRYQFAAT). Asn111 is a glycosylation site (N-linked (GlcNAc...) asparagine). Residues 129 to 149 (LAFLTWFLSLSSSLFNLWLLP) traverse the membrane as a helical segment. The Cytoplasmic portion of the chain corresponds to 150–152 (SLI).

It belongs to the Casparian strip membrane proteins (CASP) family. As to quaternary structure, homodimer and heterodimers. In terms of tissue distribution, expressed in the floral organ abscission zone and flower buds.

Its subcellular location is the cell membrane. The polypeptide is CASP-like protein 5C3 (Arabidopsis thaliana (Mouse-ear cress)).